Consider the following 236-residue polypeptide: Small ribosomal subunit protein uS2c (236 aa).

It belongs to the universal ribosomal protein uS2 family.

Its subcellular location is the plastid. The protein resides in the chloroplast. The protein is Small ribosomal subunit protein uS2c (rps2) of Acorus calamus var. americanus (American sweet flag).